The following is a 90-amino-acid chain: Probable Fe(2+)-trafficking protein (90 aa).

The protein belongs to the Fe(2+)-trafficking protein family.

In terms of biological role, could be a mediator in iron transactions between iron acquisition and iron-requiring processes, such as synthesis and/or repair of Fe-S clusters in biosynthetic enzymes. The protein is Probable Fe(2+)-trafficking protein of Nitrosospira multiformis (strain ATCC 25196 / NCIMB 11849 / C 71).